The chain runs to 241 residues: U2 small nuclear ribonucleoprotein B'' (241 aa).

The RRM 1 domain maps to 12–91 (QTLYVNNLYE…RPMKIQYCKS (80 aa)). Basic and acidic residues predominate over residues 99–126 (LDGTYMEKKREREENDKKGSNKKQDRKS). The tract at residues 99-169 (LDGTYMEKKR…PRDDPPNKTL (71 aa)) is disordered. Residues 129 to 152 (QQQQQQKRPGAPTSTTSTTSPTTS) show a composition bias toward low complexity. One can recognise an RRM 2 domain in the interval 167 to 241 (KTLFVENLPD…KPMVVSFAAQ (75 aa)).

This sequence belongs to the RRM U1 A/B'' family. Identified in the spliceosome B complex. Identified in the spliceosome C complex.

It localises to the nucleus. In terms of biological role, involved in pre-mRNA splicing as component of the spliceosome. Associated with sn-RNP U2, where it contributes to the binding of stem loop IV of U2 snRNA. This chain is U2 small nuclear ribonucleoprotein B'' (snrpb2), found in Dictyostelium discoideum (Social amoeba).